Here is a 199-residue protein sequence, read N- to C-terminus: Recombination protein RecR (199 aa).

A C4-type zinc finger spans residues 57 to 72 (CQKCRTFTEQSLCPIC). The 96-residue stretch at 81–176 (DTLCVVETPA…AVSRIAHGVP (96 aa)) folds into the Toprim domain.

The protein belongs to the RecR family.

In terms of biological role, may play a role in DNA repair. It seems to be involved in an RecBC-independent recombinational process of DNA repair. It may act with RecF and RecO. This is Recombination protein RecR from Shewanella amazonensis (strain ATCC BAA-1098 / SB2B).